Consider the following 429-residue polypeptide: Multifunctional CCA protein (429 aa).

Residues Gly27 and Arg30 each coordinate ATP. CTP contacts are provided by Gly27 and Arg30. Mg(2+)-binding residues include Asp40 and Asp42. 3 residues coordinate ATP: Arg110, Arg162, and Arg165. The CTP site is built by Arg110, Arg162, and Arg165. Positions Thr251–Leu352 constitute an HD domain.

It belongs to the tRNA nucleotidyltransferase/poly(A) polymerase family. Bacterial CCA-adding enzyme type 1 subfamily. As to quaternary structure, monomer. Can also form homodimers and oligomers. Requires Mg(2+) as cofactor. Ni(2+) serves as cofactor.

It catalyses the reaction a tRNA precursor + 2 CTP + ATP = a tRNA with a 3' CCA end + 3 diphosphate. The catalysed reaction is a tRNA with a 3' CCA end + 2 CTP + ATP = a tRNA with a 3' CCACCA end + 3 diphosphate. Catalyzes the addition and repair of the essential 3'-terminal CCA sequence in tRNAs without using a nucleic acid template. Adds these three nucleotides in the order of C, C, and A to the tRNA nucleotide-73, using CTP and ATP as substrates and producing inorganic pyrophosphate. tRNA 3'-terminal CCA addition is required both for tRNA processing and repair. Also involved in tRNA surveillance by mediating tandem CCA addition to generate a CCACCA at the 3' terminus of unstable tRNAs. While stable tRNAs receive only 3'-terminal CCA, unstable tRNAs are marked with CCACCA and rapidly degraded. The protein is Multifunctional CCA protein of Ralstonia nicotianae (strain ATCC BAA-1114 / GMI1000) (Ralstonia solanacearum).